We begin with the raw amino-acid sequence, 402 residues long: Acetylornithine aminotransferase (402 aa).

Residues glycine 106–alanine 107 and phenylalanine 132 each bind pyridoxal 5'-phosphate. Residue arginine 135 participates in N(2)-acetyl-L-ornithine binding. Aspartate 217–glutamine 220 contacts pyridoxal 5'-phosphate. Position 247 is an N6-(pyridoxal phosphate)lysine (lysine 247). Position 275 (threonine 275) interacts with N(2)-acetyl-L-ornithine. Threonine 276 is a pyridoxal 5'-phosphate binding site.

Belongs to the class-III pyridoxal-phosphate-dependent aminotransferase family. ArgD subfamily. In terms of assembly, homodimer. It depends on pyridoxal 5'-phosphate as a cofactor.

It localises to the cytoplasm. The enzyme catalyses N(2)-acetyl-L-ornithine + 2-oxoglutarate = N-acetyl-L-glutamate 5-semialdehyde + L-glutamate. It functions in the pathway amino-acid biosynthesis; L-arginine biosynthesis; N(2)-acetyl-L-ornithine from L-glutamate: step 4/4. This chain is Acetylornithine aminotransferase, found in Streptomyces coelicolor (strain ATCC BAA-471 / A3(2) / M145).